The chain runs to 293 residues: 4-diphosphocytidyl-2-C-methyl-D-erythritol kinase (293 aa).

Residue K16 is part of the active site. Residue 99–109 (PMGAGLGGGSS) coordinates ATP. Residue D141 is part of the active site.

It belongs to the GHMP kinase family. IspE subfamily.

It carries out the reaction 4-CDP-2-C-methyl-D-erythritol + ATP = 4-CDP-2-C-methyl-D-erythritol 2-phosphate + ADP + H(+). It participates in isoprenoid biosynthesis; isopentenyl diphosphate biosynthesis via DXP pathway; isopentenyl diphosphate from 1-deoxy-D-xylulose 5-phosphate: step 3/6. Its function is as follows. Catalyzes the phosphorylation of the position 2 hydroxy group of 4-diphosphocytidyl-2C-methyl-D-erythritol. The sequence is that of 4-diphosphocytidyl-2-C-methyl-D-erythritol kinase from Burkholderia pseudomallei (strain 668).